A 141-amino-acid polypeptide reads, in one-letter code: Hemoglobin subunit alpha-A (141 aa).

Positions 1–141 constitute a Globin domain; that stretch reads VLSASDKSNV…VGTVLTAKYR (141 aa). H58 is an O2 binding site. Position 87 (H87) interacts with heme b.

Belongs to the globin family. Heterotetramer of two alpha chains and two beta chains. Red blood cells.

Its function is as follows. Involved in oxygen transport from the lung to the various peripheral tissues. This chain is Hemoglobin subunit alpha-A (HBAA), found in Streptopelia orientalis (Eastern turtle dove).